The primary structure comprises 252 residues: Probable oligoribonuclease (252 aa).

Positions 81 to 241 constitute an Exonuclease domain; that stretch reads VWIDCEMTGL…ALSDILESIG (161 aa). Y202 is an active-site residue.

Belongs to the oligoribonuclease family.

Its subcellular location is the cytoplasm. It localises to the nucleus. In terms of biological role, 3'-to-5' exoribonuclease specific for small oligoribonucleotides. This is Probable oligoribonuclease (rex2) from Schizosaccharomyces pombe (strain 972 / ATCC 24843) (Fission yeast).